The following is a 427-amino-acid chain: Synaptotagmin-A (427 aa).

Residues 1–57 are Vesicular-facing; sequence MKLTEAYHDALAALPATPPLPTAVANATEAAAGSEEGKQDGFSKVKVKEKFMNELNK. Asn26 carries an N-linked (GlcNAc...) asparagine glycan. The helical transmembrane segment at 58 to 84 threads the bilayer; that stretch reads IPLPPWALVAIAIVAIILGLTCCFCIC. Residues 85 to 427 are Cytoplasmic-facing; the sequence is KKCLLKKKNK…EVDATLGMKK (343 aa). Residues 96–145 form a disordered region; the sequence is KGKEKGGKNAMTMKDVKEMGKSGKEQALKDEDEDAETGLTTDGKEEEKED. Residues 109–124 are compositionally biased toward basic and acidic residues; it reads KDVKEMGKSGKEQALK. Positions 141 to 387 are phospholipid binding; it reads EEKEDEKLGK…AIGKVFVGYN (247 aa). C2 domains follow at residues 147-266 and 278-411; these read KLGK…EEWR and KLGD…AQWH. Ca(2+)-binding residues include Leu177, Asp178, Asp184, Asp236, Phe237, Asp238, Ser241, Lys242, Asp244, Asp309, Asp315, Asp369, Asp371, and Asp377.

This sequence belongs to the synaptotagmin family. Homodimer or homotrimer (possible). Requires Ca(2+) as cofactor. Forebrain, cerebellum and neuroendocrine cells.

The protein localises to the cytoplasmic vesicle. The protein resides in the secretory vesicle. It is found in the synaptic vesicle membrane. Its subcellular location is the synapse. Functionally, may have a regulatory role in the membrane interactions during trafficking of synaptic vesicles at the active zone of the synapse. It binds acidic phospholipids with a specificity that requires the presence of both an acidic head group and a diacyl backbone. This chain is Synaptotagmin-A (P65-A), found in Diplobatis ommata (Ocellated electric ray).